A 1394-amino-acid chain; its full sequence is Kinesin-like protein KIF27 (1394 aa).

A Kinesin motor domain is found at 5-341 (PIKVAVRIRP…LKYANRARNI (337 aa)). 84-91 (GQTGSGKT) lines the ATP pocket. 2 coiled-coil regions span residues 352-418 (QADR…IEQA) and 493-554 (QVVF…ELAK). 2 disordered regions span residues 551–583 (ELAK…PHTA) and 642–664 (FSDN…SRSH). The span at 555–565 (RSSSMPTSTKE) shows a compositional bias: polar residues. Basic and acidic residues predominate over residues 571 to 580 (PDARAPEKRP). Residues serine 643, serine 646, serine 672, serine 675, and serine 704 each carry the phosphoserine modification. Residues 709-980 (LQKLRTSELI…NKKLRSSQAL (272 aa)) are a coiled coil. Serine 999 carries the phosphoserine modification. Coiled-coil stretches lie at residues 1010–1078 (TEEK…SIQN), 1118–1152 (NKVI…HELE), and 1187–1226 (QDGE…RLKD). Residues 1267–1280 (TENTKLNGREKEVD) show a composition bias toward basic and acidic residues. The interval 1267–1340 (TENTKLNGRE…SQSPPPPQLQ (74 aa)) is disordered. Polar residues-rich tracts occupy residues 1281–1295 (NSSS…TQQI) and 1310–1320 (APSSGQLQSSA). 2 positions are modified to phosphoserine: serine 1365 and serine 1387. Residues 1375–1394 (SLGAGVRSVTADSLEEPEES) form a disordered region.

It belongs to the TRAFAC class myosin-kinesin ATPase superfamily. Kinesin family. KIF27 subfamily. As to quaternary structure, interacts with STK36.

It is found in the cytoplasm. Its subcellular location is the cytoskeleton. It localises to the cell projection. The protein localises to the cilium. In terms of biological role, plays an essential role in motile ciliogenesis. The sequence is that of Kinesin-like protein KIF27 (Kif27) from Rattus norvegicus (Rat).